The sequence spans 632 residues: Epithelial sodium channel subunit alpha (632 aa).

The Cytoplasmic segment spans residues 1–49; that stretch reads MTKEEKNEKEALIEFFSSYRELFEFFCSNTTIHGAIRLVCSRRNRMKTA. Residues 50 to 70 form a helical membrane-spanning segment; it reads FWLVLFLVTFGLMYWQFGLLF. The Extracellular portion of the chain corresponds to 71–520; it reads GQYFSYPVSI…SQWSLWFGSS (450 aa). Disulfide bonds link cysteine 97–cysteine 264, cysteine 189–cysteine 196, cysteine 241–cysteine 248, cysteine 355–cysteine 440, cysteine 377–cysteine 417, cysteine 377–cysteine 436, cysteine 381–cysteine 432, cysteine 390–cysteine 417, cysteine 390–cysteine 440, and cysteine 392–cysteine 406. Residues 521–541 form a helical membrane-spanning segment; that stretch reads VLSVVEMLELVIDFVIIGVMI. Residues 542–632 lie on the Cytoplasmic side of the membrane; it reads LLHRYYYKKA…YYEENGGRRN (91 aa). The span at 612 to 622 shows a compositional bias: low complexity; that stretch reads SRSSSMRSNRS. Residues 612 to 632 are disordered; it reads SRSSSMRSNRSYYEENGGRRN. A compositionally biased stretch (basic and acidic residues) spans 623–632; sequence YYEENGGRRN.

Belongs to the amiloride-sensitive sodium channel (TC 1.A.6) family. SCNN1A subfamily. In terms of assembly, heterotrimer; containing an alpha/SCNN1A, a beta/SCNN1B and a gamma/SCNN1G subunit. Interacts with shroom1.

The protein resides in the apical cell membrane. It is found in the cell projection. The protein localises to the cilium. Its subcellular location is the cytoplasmic granule. It localises to the cytoplasm. The protein resides in the cytoplasmic vesicle. It is found in the secretory vesicle. The protein localises to the acrosome. Its subcellular location is the flagellum. It catalyses the reaction Na(+)(in) = Na(+)(out). Originally identified and characterized by its inhibition by the diuretic drug amiloride. In terms of biological role, this is one of the three pore-forming subunits of the heterotrimeric epithelial sodium channel (ENaC), a critical regulator of sodium balance and fluid homeostasis. ENaC operates in epithelial tissues, where it mediates the electrodiffusion of sodium ions from extracellular fluid through the apical membrane of cells, with water following osmotically. It plays a key role in maintaining sodium homeostasis through electrogenic sodium reabsorption in the kidneys. This Xenopus laevis (African clawed frog) protein is Epithelial sodium channel subunit alpha.